Reading from the N-terminus, the 601-residue chain is Glutamine--fructose-6-phosphate aminotransferase [isomerizing] (601 aa).

Catalysis depends on C2, which acts as the Nucleophile; for GATase activity. The Glutamine amidotransferase type-2 domain maps to C2–D218. SIS domains follow at residues I284–R423 and I453–P591. K596 functions as the For Fru-6P isomerization activity in the catalytic mechanism.

Homodimer.

The protein resides in the cytoplasm. It catalyses the reaction D-fructose 6-phosphate + L-glutamine = D-glucosamine 6-phosphate + L-glutamate. In terms of biological role, catalyzes the first step in hexosamine metabolism, converting fructose-6P into glucosamine-6P using glutamine as a nitrogen source. This chain is Glutamine--fructose-6-phosphate aminotransferase [isomerizing], found in Staphylococcus aureus (strain COL).